The following is a 106-amino-acid chain: uncharacterized protein (106 aa).

The first 27 residues, 1-27 (MHHFVPSISLFMASVSFSVFFSHLATS), serve as a signal peptide directing secretion. Residues 42–62 (TLFSMVPLINSSFNLSVFLFF) form a helical membrane-spanning segment.

It localises to the membrane. This is an uncharacterized protein from Saccharomyces cerevisiae (strain ATCC 204508 / S288c) (Baker's yeast).